Reading from the N-terminus, the 165-residue chain is PTS system glucose-specific EIIA component (165 aa).

A PTS EIIA type-1 domain is found at 34 to 138; the sequence is DPVFAQKMMG…SSITPIIISN (105 aa). Zn(2+) contacts are provided by H71 and H86. Catalysis depends on H86, which acts as the Tele-phosphohistidine intermediate; for EIIA activity. The residue at position 86 (H86) is a Phosphohistidine; by HPr.

In terms of assembly, heterodimer with glycerol kinase (glpk). Requires Zn(2+) as cofactor.

Its subcellular location is the cytoplasm. In terms of biological role, the phosphoenolpyruvate-dependent sugar phosphotransferase system (sugar PTS), a major carbohydrate active transport system, catalyzes the phosphorylation of incoming sugar substrates concomitantly with their translocation across the cell membrane. The enzyme II complex composed of PtsG and Crr is involved in glucose transport. The protein is PTS system glucose-specific EIIA component (crr) of Oceanobacillus iheyensis (strain DSM 14371 / CIP 107618 / JCM 11309 / KCTC 3954 / HTE831).